The chain runs to 387 residues: 3-ketoacyl-CoA thiolase (387 aa).

The active-site Acyl-thioester intermediate is the Cys-91. Catalysis depends on proton acceptor residues His-343 and Cys-373.

Belongs to the thiolase-like superfamily. Thiolase family. In terms of assembly, heterotetramer of two alpha chains (FadB) and two beta chains (FadA).

The protein resides in the cytoplasm. The enzyme catalyses an acyl-CoA + acetyl-CoA = a 3-oxoacyl-CoA + CoA. It functions in the pathway lipid metabolism; fatty acid beta-oxidation. Functionally, catalyzes the final step of fatty acid oxidation in which acetyl-CoA is released and the CoA ester of a fatty acid two carbons shorter is formed. The protein is 3-ketoacyl-CoA thiolase of Shewanella sp. (strain MR-7).